Reading from the N-terminus, the 725-residue chain is 1,4-alpha-glucan branching enzyme GlgB (725 aa).

The Nucleophile role is filled by aspartate 406. The active-site Proton donor is glutamate 459.

The protein belongs to the glycosyl hydrolase 13 family. GlgB subfamily. As to quaternary structure, monomer.

It catalyses the reaction Transfers a segment of a (1-&gt;4)-alpha-D-glucan chain to a primary hydroxy group in a similar glucan chain.. The protein operates within glycan biosynthesis; glycogen biosynthesis. Catalyzes the formation of the alpha-1,6-glucosidic linkages in glycogen by scission of a 1,4-alpha-linked oligosaccharide from growing alpha-1,4-glucan chains and the subsequent attachment of the oligosaccharide to the alpha-1,6 position. The protein is 1,4-alpha-glucan branching enzyme GlgB of Methylobacillus flagellatus (strain ATCC 51484 / DSM 6875 / VKM B-1610 / KT).